We begin with the raw amino-acid sequence, 392 residues long: Cytochrome b (392 aa).

A run of 4 helical transmembrane segments spans residues 38-58, 82-104, 119-139, and 185-205; these read FGSL…FLAM, WLLR…LHIF, VRCL…TGYV, and FFSL…LHLA. The heme b site is built by histidine 88 and histidine 102. Residues histidine 189 and histidine 203 each contribute to the heme b site. Position 208 (histidine 208) interacts with a ubiquinone. A run of 4 helical transmembrane segments spans residues 231 to 251, 295 to 315, 327 to 347, and 354 to 373; these read FYVK…IWIF, SGGV…PFFK, IHQG…WIGC, and FVTI…AITP.

It belongs to the cytochrome b family. As to quaternary structure, the main subunits of complex b-c1 are: cytochrome b, cytochrome c1 and the Rieske protein. Heme b serves as cofactor.

It localises to the mitochondrion inner membrane. In terms of biological role, component of the ubiquinol-cytochrome c reductase complex (complex III or cytochrome b-c1 complex) that is part of the mitochondrial respiratory chain. The b-c1 complex mediates electron transfer from ubiquinol to cytochrome c. Contributes to the generation of a proton gradient across the mitochondrial membrane that is then used for ATP synthesis. This chain is Cytochrome b (MT-CYB), found in Vicia faba (Broad bean).